The primary structure comprises 1343 residues: DNA-directed RNA polymerase subunit beta (1343 aa).

The protein belongs to the RNA polymerase beta chain family. The RNAP catalytic core consists of 2 alpha, 1 beta, 1 beta' and 1 omega subunit. When a sigma factor is associated with the core the holoenzyme is formed, which can initiate transcription.

It catalyses the reaction RNA(n) + a ribonucleoside 5'-triphosphate = RNA(n+1) + diphosphate. Functionally, DNA-dependent RNA polymerase catalyzes the transcription of DNA into RNA using the four ribonucleoside triphosphates as substrates. This chain is DNA-directed RNA polymerase subunit beta, found in Haemophilus influenzae (strain PittEE).